A 307-amino-acid chain; its full sequence is Aspartate carbamoyltransferase catalytic subunit (307 aa).

Carbamoyl phosphate contacts are provided by Arg58 and Thr59. Lys86 is an L-aspartate binding site. The carbamoyl phosphate site is built by Arg108, His136, and Gln139. 2 residues coordinate L-aspartate: Arg169 and Arg223. Residues Gly264 and Pro265 each coordinate carbamoyl phosphate.

This sequence belongs to the aspartate/ornithine carbamoyltransferase superfamily. ATCase family. In terms of assembly, heterododecamer (2C3:3R2) of six catalytic PyrB chains organized as two trimers (C3), and six regulatory PyrI chains organized as three dimers (R2).

It carries out the reaction carbamoyl phosphate + L-aspartate = N-carbamoyl-L-aspartate + phosphate + H(+). It participates in pyrimidine metabolism; UMP biosynthesis via de novo pathway; (S)-dihydroorotate from bicarbonate: step 2/3. In terms of biological role, catalyzes the condensation of carbamoyl phosphate and aspartate to form carbamoyl aspartate and inorganic phosphate, the committed step in the de novo pyrimidine nucleotide biosynthesis pathway. In Moorella thermoacetica (strain ATCC 39073 / JCM 9320), this protein is Aspartate carbamoyltransferase catalytic subunit.